We begin with the raw amino-acid sequence, 796 residues long: Protocadherin beta-3 (796 aa).

The first 26 residues, 1–26 (MEAGGERFLRQRQVLLLFVFLGGSLA), serve as a signal peptide directing secretion. Over 27 to 690 (GSESRRYSVA…AQADLLTVYL (664 aa)) the chain is Extracellular. 5 Cadherin domains span residues 35–133 (VAEE…SPVF), 138–242 (MHLK…APEF), 247–347 (YEVA…PPEL), 352–451 (VNSP…APAF), and 456–561 (YTLF…SPFV). Asn-169 carries N-linked (GlcNAc...) asparagine glycosylation. Asn-418 and Asn-436 each carry an N-linked (GlcNAc...) asparagine glycan. Asn-567 carries N-linked (GlcNAc...) asparagine glycosylation. The region spanning 568–671 (GSAPCTELVP…LVDGFSQPYL (104 aa)) is the Cadherin 6 domain. The chain crosses the membrane as a helical span at residues 691 to 711 (VVALASVSSLFLFSVLLFVAV). Residues 712 to 796 (RLCRRSRAAS…PSFRKSFEFS (85 aa)) lie on the Cytoplasmic side of the membrane.

Its subcellular location is the cell membrane. Its function is as follows. Potential calcium-dependent cell-adhesion protein. May be involved in the establishment and maintenance of specific neuronal connections in the brain. This Pan troglodytes (Chimpanzee) protein is Protocadherin beta-3 (PCDHB3).